The primary structure comprises 250 residues: Probable xyloglucan-specific endo-beta-1,4-glucanase A (250 aa).

Residues 1 to 19 form the signal peptide; the sequence is MKLSVLSLASLASAAALNA. A glycan (N-linked (GlcNAc...) asparagine) is linked at Asn72.

The protein belongs to the glycosyl hydrolase 12 (cellulase H) family.

The protein resides in the secreted. It carries out the reaction xyloglucan + H2O = xyloglucan oligosaccharides.. Catalyzes endohydrolysis of 1,4-beta-D-glucosidic linkages in xyloglucan with retention of the beta-configuration of the glycosyl residues. Specific for xyloglucan and does not hydrolyze other cell wall components. The sequence is that of Probable xyloglucan-specific endo-beta-1,4-glucanase A (xgeA) from Aspergillus terreus (strain NIH 2624 / FGSC A1156).